A 430-amino-acid chain; its full sequence is Dihydrolipoyllysine-residue acetyltransferase component of pyruvate dehydrogenase complex (430 aa).

The region spanning 2 to 77 (AFEFRLPDIG…VVGDVIVKID (76 aa)) is the Lipoyl-binding domain. At Lys43 the chain carries N6-lipoyllysine. Residues 80-122 (DAEDMQFKGHDDDSSSKEEPAKEEAPAEQAPVATQTEEVDENR) form a disordered region. Basic and acidic residues predominate over residues 84 to 104 (MQFKGHDDDSSSKEEPAKEEA). The Peripheral subunit-binding (PSBD) domain occupies 125–162 (KAMPSVRKYAREKGVNIKAVSGSGKNGRITKEDVDAYL). A disordered region spans residues 164–200 (GGAPTASNESADSATNEEVAETPAAPAAVSLEGDFPE). Over residues 177–192 (ATNEEVAETPAAPAAV) the composition is skewed to low complexity. His401 is an active-site residue.

The protein belongs to the 2-oxoacid dehydrogenase family. Forms a 24-polypeptide structural core with octahedral symmetry. (R)-lipoate is required as a cofactor.

It carries out the reaction N(6)-[(R)-dihydrolipoyl]-L-lysyl-[protein] + acetyl-CoA = N(6)-[(R)-S(8)-acetyldihydrolipoyl]-L-lysyl-[protein] + CoA. The pyruvate dehydrogenase complex catalyzes the overall conversion of pyruvate to acetyl-CoA and CO(2). It contains multiple copies of three enzymatic components: pyruvate dehydrogenase (E1), dihydrolipoamide acetyltransferase (E2) and lipoamide dehydrogenase (E3). This Staphylococcus aureus protein is Dihydrolipoyllysine-residue acetyltransferase component of pyruvate dehydrogenase complex (pdhC).